The primary structure comprises 282 residues: Biotin synthase (282 aa).

The region spanning 1–228 (MQEIFLCSIS…NARLMAAGGR (228 aa)) is the Radical SAM core domain. 3 residues coordinate [4Fe-4S] cluster: Cys-17, Cys-21, and Cys-24. 4 residues coordinate [2Fe-2S] cluster: Cys-61, Cys-96, Cys-154, and Arg-221.

The protein belongs to the radical SAM superfamily. Biotin synthase family. As to quaternary structure, homodimer. Requires [4Fe-4S] cluster as cofactor. [2Fe-2S] cluster serves as cofactor.

The catalysed reaction is (4R,5S)-dethiobiotin + (sulfur carrier)-SH + 2 reduced [2Fe-2S]-[ferredoxin] + 2 S-adenosyl-L-methionine = (sulfur carrier)-H + biotin + 2 5'-deoxyadenosine + 2 L-methionine + 2 oxidized [2Fe-2S]-[ferredoxin]. Its pathway is cofactor biosynthesis; biotin biosynthesis; biotin from 7,8-diaminononanoate: step 2/2. Catalyzes the conversion of dethiobiotin (DTB) to biotin by the insertion of a sulfur atom into dethiobiotin via a radical-based mechanism. This chain is Biotin synthase, found in Helicobacter acinonychis (strain Sheeba).